A 110-amino-acid chain; its full sequence is Large ribosomal subunit protein uL22 (110 aa).

The protein belongs to the universal ribosomal protein uL22 family. Part of the 50S ribosomal subunit.

In terms of biological role, this protein binds specifically to 23S rRNA; its binding is stimulated by other ribosomal proteins, e.g. L4, L17, and L20. It is important during the early stages of 50S assembly. It makes multiple contacts with different domains of the 23S rRNA in the assembled 50S subunit and ribosome. Functionally, the globular domain of the protein is located near the polypeptide exit tunnel on the outside of the subunit, while an extended beta-hairpin is found that lines the wall of the exit tunnel in the center of the 70S ribosome. The chain is Large ribosomal subunit protein uL22 from Vesicomyosocius okutanii subsp. Calyptogena okutanii (strain HA).